A 290-amino-acid polypeptide reads, in one-letter code: MYG1 protein CPn_0489/CP_0265/CPj0489/CpB0509 (290 aa).

The protein belongs to the MYG1 family.

The protein is MYG1 protein CPn_0489/CP_0265/CPj0489/CpB0509 of Chlamydia pneumoniae (Chlamydophila pneumoniae).